A 219-amino-acid polypeptide reads, in one-letter code: Poxin (219 aa).

Catalysis depends on His17, which acts as the Proton donor. Tyr138 (shared with catalytic histidine of dimeric partner) is an active-site residue. Lys142 (proton acceptor; shared with catalytic histidine of dimeric partner) is an active-site residue.

Belongs to the poxin family. As to quaternary structure, homodimer.

It carries out the reaction 2',3'-cGAMP + H2O = Gp(2'-5')Ap(3') + H(+). Its function is as follows. Nuclease that is responsible for viral evasion of host cGAS-STING innate immunity. Cleaves 2',3'-cGAMP which is produced by host cGAS following recognition of cytosolic DNA and blocks the subsequent 2',3'-cGAMP-mediated activation of TMEM173/STING, which normally spreads to adjacent cells and activates the interferon and NF-kappa-B immune responses. This chain is Poxin (OPG188), found in Bos taurus (Bovine).